A 277-amino-acid polypeptide reads, in one-letter code: Large ribosomal subunit protein uL2 (277 aa).

2 disordered regions span residues 32–58 (KSLTKGKKFKSGRDSSGRISIRRRGGG) and 225–277 (VAMN…RRNK). Residues 258-277 (YKTRKKKRYSDKFIIKRRNK) are compositionally biased toward basic residues.

The protein belongs to the universal ribosomal protein uL2 family. Part of the 50S ribosomal subunit. Forms a bridge to the 30S subunit in the 70S ribosome.

In terms of biological role, one of the primary rRNA binding proteins. Required for association of the 30S and 50S subunits to form the 70S ribosome, for tRNA binding and peptide bond formation. It has been suggested to have peptidyltransferase activity; this is somewhat controversial. Makes several contacts with the 16S rRNA in the 70S ribosome. The chain is Large ribosomal subunit protein uL2 from Borreliella burgdorferi (strain ATCC 35210 / DSM 4680 / CIP 102532 / B31) (Borrelia burgdorferi).